The following is a 541-amino-acid chain: Interleukin-18 receptor 1 (541 aa).

A signal peptide spans 1-18 (MNCRELPLTLWVLISVST). 2 disulfides stabilise this stretch: C22–C41 and C43–C81. The Extracellular segment spans residues 22 to 329 (CTSRPHITVV…ADIPGHVFTR (308 aa)). 3 Ig-like C2-type domains span residues 33–121 (GEPF…SCFT), 133–212 (KKFF…DRSN), and 220–312 (PKLN…KSFI). N-linked (GlcNAc...) asparagine glycans are attached at residues N91, N102, N150, N197, N203, N236, N255, and N297. Cystine bridges form between C119–C158 and C140–C185. An intrachain disulfide couples C237 to C298. Residues 330 to 350 (GMIIAVLILVAVVCLVTVCVI) form a helical membrane-spanning segment. The Cytoplasmic segment spans residues 351–541 (YRVDLVLFYR…PEVLPVLSES (191 aa)). The TIR domain occupies 373–520 (KTYDAFVSYL…RFWKNLLYLM (148 aa)). Residue E455 is part of the active site.

It belongs to the interleukin-1 receptor family. In terms of assembly, forms a ternary complex with IL18 and IL18RAP. Within this complex, IL18R1 is involved in ligand-binding and IL18RAP in signaling leading to NF-kappa-B and JNK activation. Interacts with SLC12A3 in peritoneal macrophages; this interaction is increased by IL18 treatment. N-glycosylated. N-linked glycosyl chains contribute to ligand recognition and intra-receptor interactions required for formation of an active ternary receptor complex. As to expression, highly expressed in leukocytes, spleen, lung. Also expressed, but at lower levels, in liver, small intestine, colon, prostate, thymus, placenta, and heart. Specifically coexpressed with IL18R1 in Th1 cells.

It is found in the membrane. It carries out the reaction NAD(+) + H2O = ADP-D-ribose + nicotinamide + H(+). Its function is as follows. Within the IL18 receptor complex, responsible for the binding of the pro-inflammatory cytokine IL18, but not IL1A nor IL1B. Involved in IL18-mediated IFNG synthesis from T-helper 1 (Th1) cells. Contributes to IL18-induced cytokine production, either independently of SLC12A3, or as a complex with SLC12A3. In Homo sapiens (Human), this protein is Interleukin-18 receptor 1.